We begin with the raw amino-acid sequence, 249 residues long: Isoamyl acetate-hydrolyzing esterase 1 homolog (249 aa).

Ser-24 acts as the Nucleophile in catalysis. Position 63 is an N6-succinyllysine (Lys-63). The Proton donor role is filled by Asp-197. The active-site Proton acceptor is His-200.

This sequence belongs to the 'GDSL' lipolytic enzyme family. IAH1 subfamily.

Probable lipase. This Rattus norvegicus (Rat) protein is Isoamyl acetate-hydrolyzing esterase 1 homolog (Iah1).